Consider the following 615-residue polypeptide: ATP-dependent RNA helicase mrh4, mitochondrial (615 aa).

A mitochondrion-targeting transit peptide spans 1–37 (MLRPKAGKCLLCSFRAAQKPVSQKWPSRALSMRTRLP). Residues 21 to 108 (VSQKWPSRAL…HRDRDDKKDR (88 aa)) are disordered. A compositionally biased stretch (basic and acidic residues) spans 90 to 108 (QERRTSRLDHRDRDDKKDR). Positions 138–171 (QSFEQFALLDSVKQAIFQQALPELKEHVPTPVQR) match the Q motif motif. Residues 184 to 395 (RRPKSEMEQY…RKRFPDINRL (212 aa)) enclose the Helicase ATP-binding domain. 197-204 (AETGSGKT) serves as a coordination point for ATP. The DEAD box signature appears at 342–345 (DEAD). The 172-residue stretch at 444-615 (PVKGLMDVKR…EGMFEGKALI (172 aa)) folds into the Helicase C-terminal domain.

The protein belongs to the DEAD box helicase family. MRH4 subfamily.

It localises to the mitochondrion. The catalysed reaction is ATP + H2O = ADP + phosphate + H(+). ATP-binding RNA helicase involved in mitochondrial RNA metabolism. Required for maintenance of mitochondrial DNA. The polypeptide is ATP-dependent RNA helicase mrh4, mitochondrial (mrh4) (Sclerotinia sclerotiorum (strain ATCC 18683 / 1980 / Ss-1) (White mold)).